Consider the following 285-residue polypeptide: 2-dehydro-3-deoxyphosphooctonate aldolase (285 aa).

It belongs to the KdsA family.

It is found in the cytoplasm. It catalyses the reaction D-arabinose 5-phosphate + phosphoenolpyruvate + H2O = 3-deoxy-alpha-D-manno-2-octulosonate-8-phosphate + phosphate. It participates in carbohydrate biosynthesis; 3-deoxy-D-manno-octulosonate biosynthesis; 3-deoxy-D-manno-octulosonate from D-ribulose 5-phosphate: step 2/3. The protein operates within bacterial outer membrane biogenesis; lipopolysaccharide biosynthesis. The protein is 2-dehydro-3-deoxyphosphooctonate aldolase of Acidovorax sp. (strain JS42).